We begin with the raw amino-acid sequence, 273 residues long: Large ribosomal subunit protein uL2cz/uL2cy (273 aa).

Disordered stretches follow at residues 1–25 and 225–253; these read MAKH…VKSN and PVDH…YPAL.

The protein belongs to the universal ribosomal protein uL2 family. In terms of assembly, part of the 50S ribosomal subunit.

It is found in the plastid. Its subcellular location is the chloroplast. The sequence is that of Large ribosomal subunit protein uL2cz/uL2cy (rpl2-A) from Triticum aestivum (Wheat).